Here is a 253-residue protein sequence, read N- to C-terminus: Ribosome maturation protein SBDS (253 aa).

It belongs to the SDO1/SBDS family. Associates with the 60S ribosomal subunit.

The protein resides in the cytoplasm. It localises to the nucleus. It is found in the nucleolus. Its subcellular location is the nucleoplasm. The protein localises to the cytoskeleton. The protein resides in the spindle. In terms of biological role, required for the assembly of mature ribosomes and ribosome biogenesis. Together with K10C3.5b/EFL1, triggers the GTP-dependent release of ribosome maturation factors from 60S pre-ribosomes in the cytoplasm, thereby activating ribosomes for translation competence by allowing 80S ribosome assembly. Required for normal levels of protein synthesis. May play a role in cellular stress resistance. May play a role in cellular response to DNA damage. May play a role in cell proliferation. In Caenorhabditis elegans, this protein is Ribosome maturation protein SBDS (sbds-1).